Reading from the N-terminus, the 277-residue chain is Proteasome assembly chaperone 1 (277 aa).

The protein belongs to the PSMG1 family. As to quaternary structure, forms a heterodimer with psmg2. Post-translationally, degraded by the proteasome upon completion of 20S proteasome maturation.

The protein resides in the cytoplasm. It localises to the endoplasmic reticulum. Its function is as follows. Chaperone protein which promotes assembly of the 20S proteasome as part of a heterodimer with psmg2. The sequence is that of Proteasome assembly chaperone 1 from Danio rerio (Zebrafish).